We begin with the raw amino-acid sequence, 440 residues long: MSAIIQAFKDADLRKKIFFTIAMIVLYRIGAQIPSPGVDYATISGRLRDLTQDQSSVYSLINLFSGGALLQLSIFAIGIMPYITASIIVQLLTVVIPHFEELKKEGQSGQAKMMQYTRYLTVALALLQSSGIVALADREQLLGAGIRVLSADRNFFDLIVLVITMTAGAVLVMWMGELITEKGVGNGMSLLIFAGIATRLPTDGMNILGNSGGVVFAVVLASVLILVIGVVFVEQGQRRIPVQYAKRMVGRRQYGGSSTYLPLKVNQAGVIPVIFASSLIYMPVLITQIVNSGSLEVSDNWWQRNIIAHLQTPSSWQYIVLYFALTIFFSYFYVSVQYDPAEQAENMKKYGGFIPGIRPGRPTAEYLGFVMNRLLFVGSLYLAVIAVLPNIMLDLGVDAGSAGATPFGGTAILILVSVALTTVKQIESQLLQSNYEGLLK.

The next 10 helical transmembrane spans lie at 17–37 (IFFT…PSPG), 74–94 (IFAI…LLTV), 116–135 (YTRY…IVAL), 155–175 (FFDL…VMWM), 178–198 (LITE…GIAT), 213–233 (GVVF…VVFV), 270–290 (VIPV…TQIV), 316–336 (WQYI…YVSV), 374–394 (LLFV…IMLD), and 403–423 (GATP…LTTV).

Belongs to the SecY/SEC61-alpha family. In terms of assembly, component of the Sec protein translocase complex. Heterotrimer consisting of SecY, SecE and SecG subunits. The heterotrimers can form oligomers, although 1 heterotrimer is thought to be able to translocate proteins. Interacts with the ribosome. Interacts with SecDF, and other proteins may be involved. Interacts with SecA.

It is found in the cell membrane. Functionally, the central subunit of the protein translocation channel SecYEG. Consists of two halves formed by TMs 1-5 and 6-10. These two domains form a lateral gate at the front which open onto the bilayer between TMs 2 and 7, and are clamped together by SecE at the back. The channel is closed by both a pore ring composed of hydrophobic SecY resides and a short helix (helix 2A) on the extracellular side of the membrane which forms a plug. The plug probably moves laterally to allow the channel to open. The ring and the pore may move independently. In Corynebacterium glutamicum (strain ATCC 13032 / DSM 20300 / JCM 1318 / BCRC 11384 / CCUG 27702 / LMG 3730 / NBRC 12168 / NCIMB 10025 / NRRL B-2784 / 534), this protein is Protein translocase subunit SecY.